Consider the following 162-residue polypeptide: MALNLQDKKAIVAEVNEAASGALSAVVADSRGVQVAAMTNLRKQAREAGVYLKVVRNTLARRAVEGTAYECLKDVFVGPTLIGFSNEHPGAAARLFKDFAKENKAFEIKAAAFEGVLTDPEVLATLPTYDEAIARLMMCMKEASAGKLVRTIAAVRDQKEAA.

The protein belongs to the universal ribosomal protein uL10 family. Part of the ribosomal stalk of the 50S ribosomal subunit. The N-terminus interacts with L11 and the large rRNA to form the base of the stalk. The C-terminus forms an elongated spine to which L12 dimers bind in a sequential fashion forming a multimeric L10(L12)X complex.

Its function is as follows. Forms part of the ribosomal stalk, playing a central role in the interaction of the ribosome with GTP-bound translation factors. The polypeptide is Large ribosomal subunit protein uL10 (Vibrio cholerae serotype O1 (strain ATCC 39541 / Classical Ogawa 395 / O395)).